The following is a 357-amino-acid chain: Sulfate/thiosulfate import ATP-binding protein CysA (357 aa).

Positions 3-237 (ITIQNLNKHF…PENAFVTEFL (235 aa)) constitute an ABC transporter domain. An ATP-binding site is contributed by 35–42 (GPSGCGKT).

Belongs to the ABC transporter superfamily. Sulfate/tungstate importer (TC 3.A.1.6) family. The complex is composed of two ATP-binding proteins (CysA), two transmembrane proteins (CysT and CysW) and a solute-binding protein (CysP).

Its subcellular location is the cell inner membrane. It carries out the reaction sulfate(out) + ATP + H2O = sulfate(in) + ADP + phosphate + H(+). It catalyses the reaction thiosulfate(out) + ATP + H2O = thiosulfate(in) + ADP + phosphate + H(+). Functionally, part of the ABC transporter complex CysAWTP involved in sulfate/thiosulfate import. Responsible for energy coupling to the transport system. This Neisseria meningitidis serogroup A / serotype 4A (strain DSM 15465 / Z2491) protein is Sulfate/thiosulfate import ATP-binding protein CysA.